The sequence spans 200 residues: GTP cyclohydrolase 1 (200 aa).

Cysteine 87, histidine 90, and cysteine 158 together coordinate Zn(2+).

This sequence belongs to the GTP cyclohydrolase I family. In terms of assembly, toroid-shaped homodecamer, composed of two pentamers of five dimers.

The catalysed reaction is GTP + H2O = 7,8-dihydroneopterin 3'-triphosphate + formate + H(+). Its pathway is cofactor biosynthesis; 7,8-dihydroneopterin triphosphate biosynthesis; 7,8-dihydroneopterin triphosphate from GTP: step 1/1. The sequence is that of GTP cyclohydrolase 1 from Xanthomonas campestris pv. campestris (strain ATCC 33913 / DSM 3586 / NCPPB 528 / LMG 568 / P 25).